We begin with the raw amino-acid sequence, 673 residues long: Leucine zipper putative tumor suppressor 3 (673 aa).

Disordered stretches follow at residues 1-157 (MAKL…CSEP), 172-239 (FHSM…QHLA), and 251-317 (IGTA…PPSP). A compositionally biased stretch (basic and acidic residues) spans 79 to 92 (SRERPGRYPSEDKG). The segment covering 173 to 186 (HSMQNLCPPQTNGT) has biased composition (polar residues). Low complexity predominate over residues 215-235 (GLSDSGRNSLTSLPTYSSSYS). Gly residues predominate over residues 258-269 (SGSGGSSGGGSG). Over residues 274 to 294 (GTSDSGRASSKSGSSSSMGRP) the composition is skewed to low complexity. The span at 295 to 307 (GHLGSGEGGGGGL) shows a compositional bias: gly residues. A phosphoserine mark is found at S316 and S318. Coiled-coil stretches lie at residues 317–496 (PSAL…SLRD) and 571–639 (RALR…RLRE). Positions 635 to 673 (RRLRERGAAGGASTPTPQHGEEKKAWTPSRLERIESTEI) are disordered. Residues 653–673 (HGEEKKAWTPSRLERIESTEI) are compositionally biased toward basic and acidic residues.

Belongs to the LZTS3 family. Interacts (via C-terminus) with SHANK3 (via PDZ domain). Interacts (via coiled coil) with SIPA1L1. Can form homooligomers.

Its subcellular location is the synapse. It localises to the postsynaptic density. The protein resides in the cell projection. It is found in the dendritic spine. The protein localises to the dendrite. Its subcellular location is the cytoplasm. It localises to the cytoskeleton. May be involved in promoting the maturation of dendritic spines, probably via regulating SIPA1L1 levels at the postsynaptic density of synapses. The protein is Leucine zipper putative tumor suppressor 3 of Homo sapiens (Human).